A 68-amino-acid chain; its full sequence is Alpha-conotoxin-like Mr1.2 (68 aa).

Positions 1–21 are cleaved as a signal peptide; the sequence is MGMRMMFTVFLLVVLATTVVS. The propeptide occupies 22 to 48; it reads FTSDRGSDGRNAAAKDKASDLVALTVK. Cystine bridges form between C50–C56 and C51–C64. Positions 52–54 are ser-Xaa-Pro motif, crucial for potent interaction with nAChR; that stretch reads SNP. Asparagine amide is present on N65.

It belongs to the conotoxin A superfamily. Expressed by the venom duct.

The protein localises to the secreted. Functionally, alpha-conotoxins act on postsynaptic membranes, they bind to the nicotinic acetylcholine receptors (nAChR) and thus inhibit them. This chain is Alpha-conotoxin-like Mr1.2, found in Conus marmoreus (Marble cone).